Consider the following 421-residue polypeptide: UDP-N-acetylglucosamine 1-carboxyvinyltransferase (421 aa).

22–23 (KN) contacts phosphoenolpyruvate. Residue R93 coordinates UDP-N-acetyl-alpha-D-glucosamine. The Proton donor role is filled by C117. Position 117 is a 2-(S-cysteinyl)pyruvic acid O-phosphothioketal (C117). UDP-N-acetyl-alpha-D-glucosamine-binding positions include 122 to 126 (RPVDL), D308, and I330.

This sequence belongs to the EPSP synthase family. MurA subfamily.

Its subcellular location is the cytoplasm. It catalyses the reaction phosphoenolpyruvate + UDP-N-acetyl-alpha-D-glucosamine = UDP-N-acetyl-3-O-(1-carboxyvinyl)-alpha-D-glucosamine + phosphate. Its pathway is cell wall biogenesis; peptidoglycan biosynthesis. Cell wall formation. Adds enolpyruvyl to UDP-N-acetylglucosamine. This is UDP-N-acetylglucosamine 1-carboxyvinyltransferase from Pseudomonas putida (strain GB-1).